The following is a 249-amino-acid chain: 2,3-bisphosphoglycerate-dependent phosphoglycerate mutase (249 aa).

Residues 8 to 15 (RHGESTWN), 21 to 22 (TG), Arg-60, 87 to 90 (ERHY), Lys-98, 114 to 115 (RR), and 183 to 184 (GN) each bind substrate. Residue His-9 is the Tele-phosphohistidine intermediate of the active site. The active-site Proton donor/acceptor is the Glu-87.

Belongs to the phosphoglycerate mutase family. BPG-dependent PGAM subfamily. As to quaternary structure, homodimer.

It catalyses the reaction (2R)-2-phosphoglycerate = (2R)-3-phosphoglycerate. The protein operates within carbohydrate degradation; glycolysis; pyruvate from D-glyceraldehyde 3-phosphate: step 3/5. Catalyzes the interconversion of 2-phosphoglycerate and 3-phosphoglycerate. The polypeptide is 2,3-bisphosphoglycerate-dependent phosphoglycerate mutase (Azoarcus sp. (strain BH72)).